Here is a 348-residue protein sequence, read N- to C-terminus: UPF0324 membrane protein BPP3732 (348 aa).

10 helical membrane-spanning segments follow: residues 20–39, 43–62, 98–120, 135–157, 164–186, 196–215, 235–257, 267–286, 299–318, and 322–344; these read GILFVALMAAAVVQLADLPF, FGFSPLVVGIVCGMLYGNFL, IAAVGLPGLAVSVGVVASTLLIG, AMLTAAGSAICGAAAVLAFEPTL, SAVAVATVVLFGTLSMFLYPVIY, QALGIYIGGTVHEVAQVVGA, VALLVPVLLVLGFWLRASAAAGA, VPWFAIGFLVLAIVNSLDIL, VFVLTMAMTALGIETRFAQI, and GPRVMALGLVLYAWLVFGGYGIV.

This sequence belongs to the UPF0324 family.

It is found in the cell membrane. The sequence is that of UPF0324 membrane protein BPP3732 from Bordetella parapertussis (strain 12822 / ATCC BAA-587 / NCTC 13253).